Consider the following 173-residue polypeptide: Alpha-crystallin A chain (173 aa).

An N-acetylmethionine modification is found at methionine 1. The 113-residue stretch at 52–164 folds into the sHSP domain; the sequence is LFRSVLESGI…SDRPIPVARE (113 aa). Residues histidine 100, glutamate 102, histidine 107, and histidine 154 each coordinate Zn(2+). Residues 152–173 are disordered; sequence TIHSDRPIPVAREEKPTSAPSS. The segment covering 153 to 167 has biased composition (basic and acidic residues); it reads IHSDRPIPVAREEKP.

This sequence belongs to the small heat shock protein (HSP20) family. In terms of assembly, heteropolymer composed of three CRYAA and one CRYAB subunits. Inter-subunit bridging via zinc ions enhances stability, which is crucial as there is no protein turn over in the lens. Can also form homodimers and homotetramers (dimers of dimers) which serve as the building blocks of homooligomers. Within homooligomers, the zinc-binding motif is created from residues of 3 different molecules. His-100 and Glu-102 from one molecule are ligands of the zinc ion, and His-107 and His-154 residues from additional molecules complete the site with tetrahedral coordination geometry.

The protein localises to the cytoplasm. The protein resides in the nucleus. Contributes to the transparency and refractive index of the lens. May act as a chaperone, preventing aggregation of various proteins under a wide range of stress conditions. This is Alpha-crystallin A chain (CRYAA) from Alligator mississippiensis (American alligator).